Consider the following 87-residue polypeptide: UPF0367 protein SynWH7803_2240 (87 aa).

The protein belongs to the UPF0367 family.

The polypeptide is UPF0367 protein SynWH7803_2240 (Synechococcus sp. (strain WH7803)).